The chain runs to 291 residues: 33 kDa chaperonin (291 aa).

2 cysteine pairs are disulfide-bonded: C229-C231 and C262-C265.

This sequence belongs to the HSP33 family. In terms of processing, under oxidizing conditions two disulfide bonds are formed involving the reactive cysteines. Under reducing conditions zinc is bound to the reactive cysteines and the protein is inactive.

It is found in the cytoplasm. In terms of biological role, redox regulated molecular chaperone. Protects both thermally unfolding and oxidatively damaged proteins from irreversible aggregation. Plays an important role in the bacterial defense system toward oxidative stress. This chain is 33 kDa chaperonin, found in Vibrio cholerae serotype O1 (strain ATCC 39315 / El Tor Inaba N16961).